The following is a 461-amino-acid chain: Fumarate hydratase class II (461 aa).

Substrate is bound by residues 97–99 (SGT), 127–130 (HPND), 137–139 (SSN), and threonine 185. The Proton donor/acceptor role is filled by histidine 186. Serine 316 is a catalytic residue. Residues serine 317 and 322-324 (KVN) contribute to the substrate site.

It belongs to the class-II fumarase/aspartase family. Fumarase subfamily. In terms of assembly, homotetramer.

It is found in the cytoplasm. It catalyses the reaction (S)-malate = fumarate + H2O. It participates in carbohydrate metabolism; tricarboxylic acid cycle; (S)-malate from fumarate: step 1/1. In terms of biological role, involved in the TCA cycle. Catalyzes the stereospecific interconversion of fumarate to L-malate. The protein is Fumarate hydratase class II of Staphylococcus aureus (strain MSSA476).